The chain runs to 548 residues: DNA ligase (548 aa).

Glutamate 252 contacts ATP. The active-site N6-AMP-lysine intermediate is the lysine 254. Residues arginine 259, arginine 274, glutamate 303, phenylalanine 343, arginine 414, and lysine 420 each coordinate ATP.

It belongs to the ATP-dependent DNA ligase family. Mg(2+) is required as a cofactor.

The catalysed reaction is ATP + (deoxyribonucleotide)n-3'-hydroxyl + 5'-phospho-(deoxyribonucleotide)m = (deoxyribonucleotide)n+m + AMP + diphosphate.. DNA ligase that seals nicks in double-stranded DNA during DNA replication, DNA recombination and DNA repair. The sequence is that of DNA ligase from Natronomonas pharaonis (strain ATCC 35678 / DSM 2160 / CIP 103997 / JCM 8858 / NBRC 14720 / NCIMB 2260 / Gabara) (Halobacterium pharaonis).